Here is a 589-residue protein sequence, read N- to C-terminus: Complement component C8 beta chain (589 aa).

The N-terminal stretch at 1-31 (MKTGAQVWRALAKSCLLCAALGCLHLPGARG) is a signal peptide. A propeptide spanning residues 32–53 (EKPDFFETNAVNGSLVRSRPVR) is cleaved from the precursor. A glycan (N-linked (GlcNAc...) asparagine) is linked at asparagine 43. Residues 63 to 116 (DCQLSTWSSWTACDPCQKKRYRHTYLLRPSQFYGELCDFSDKEVEDCVTNRACR) enclose the TSP type-1 1 domain. Intrachain disulfides connect cysteine 64–cysteine 99, cysteine 75–cysteine 109, cysteine 78–cysteine 115, cysteine 121–cysteine 132, cysteine 126–cysteine 145, cysteine 139–cysteine 154, and cysteine 161–cysteine 199. 2 C-linked (Man) tryptophan glycosylation sites follow: tryptophan 69 and tryptophan 72. The LDL-receptor class A domain maps to 120-155 (RCEGFVCAQTGRCVNRRLLCNGDNDCGDQSDEANCR). Positions 137, 140, 142, 144, 150, and 151 each coordinate Ca(2+). The MACPF domain occupies 157 to 503 (IYKKCSQDME…EFQMEVSSCR (347 aa)). N-linked (GlcNAc...) asparagine glycosylation is present at asparagine 242. 4 consecutive transmembrane segments (beta stranded) span residues 251-258 (SSFKFGFK), 261-268 (GLVEFGVR), 378-385 (AGGGFQIG), and 391-398 (VYLKLGVS). A disulfide bridge links cysteine 377 with cysteine 402. Threonine 417 carries the post-translational modification Phosphothreonine. Cystine bridges form between cysteine 502–cysteine 549, cysteine 504–cysteine 520, cysteine 507–cysteine 522, and cysteine 524–cysteine 533. Residues 504-534 (CAPCRNNGVPILKESRCECICPAGFQGVACE) enclose the EGF-like domain. Residues 544-587 (DGKWSCWSDWSPCSGGRKTRQRQCNNPAPQRGGSPCSGPASETL) enclose the TSP type-1 2 domain. Tryptophan 550 and tryptophan 553 each carry a C-linked (Man) tryptophan glycan. Cysteine 556 and cysteine 589 are oxidised to a cystine. The segment at 556–589 (CSGGRKTRQRQCNNPAPQRGGSPCSGPASETLDC) is disordered.

This sequence belongs to the complement C6/C7/C8/C9 family. In terms of assembly, heterotrimer of 3 chains: alpha (C8A), beta (C8B) and gamma (C8G); the alpha and gamma chains are disulfide bonded. Component of the membrane attack complex (MAC), composed of complement C5b, C6, C7, C8A, C8B, C8G and multiple copies of the pore-forming subunit C9. Post-translationally, N-glycosylated; contains one or two bound glycans. Not O-glycosylated.

The protein localises to the secreted. It is found in the target cell membrane. Its activity is regulated as follows. Membrane attack complex (MAC) assembly is inhibited by CD59, thereby protecting self-cells from damage during complement activation. CD59 acts by binding to the beta-haipins of C8 (C8A and C8B), forming an intermolecular beta-sheet that prevents incorporation of the multiple copies of C9 required for complete formation of the osmolytic pore. MAC assembly is also inhibited by clusterin (CLU) chaperones that inhibit polymerization of C9. Component of the membrane attack complex (MAC), a multiprotein complex activated by the complement cascade, which inserts into a target cell membrane and forms a pore, leading to target cell membrane rupture and cell lysis. The MAC is initiated by proteolytic cleavage of C5 into complement C5b in response to the classical, alternative, lectin and GZMK complement pathways. The complement pathways consist in a cascade of proteins that leads to phagocytosis and breakdown of pathogens and signaling that strengthens the adaptive immune system. C8B, together with C8A and C8G, inserts into the target membrane, but does not form pores by itself. During MAC assembly, associates with C5b, C6 and C7 to form the C5b8 intermediate complex that inserts into the target membrane and traverses the bilayer increasing membrane rigidity. This is Complement component C8 beta chain (C8b) from Rattus norvegicus (Rat).